Consider the following 115-residue polypeptide: Large ribosomal subunit protein bL19 (115 aa).

It belongs to the bacterial ribosomal protein bL19 family.

Functionally, this protein is located at the 30S-50S ribosomal subunit interface and may play a role in the structure and function of the aminoacyl-tRNA binding site. The sequence is that of Large ribosomal subunit protein bL19 (rplS) from Thermotoga maritima (strain ATCC 43589 / DSM 3109 / JCM 10099 / NBRC 100826 / MSB8).